We begin with the raw amino-acid sequence, 211 residues long: N-(5'-phosphoribosyl)anthranilate isomerase (211 aa).

This sequence belongs to the TrpF family.

It carries out the reaction N-(5-phospho-beta-D-ribosyl)anthranilate = 1-(2-carboxyphenylamino)-1-deoxy-D-ribulose 5-phosphate. It functions in the pathway amino-acid biosynthesis; L-tryptophan biosynthesis; L-tryptophan from chorismate: step 3/5. The chain is N-(5'-phosphoribosyl)anthranilate isomerase from Pseudomonas aeruginosa (strain UCBPP-PA14).